The primary structure comprises 141 residues: Nucleoside triphosphatase NudI (141 aa).

The Nudix hydrolase domain maps to M1 to L141. The Nudix box motif lies at G38–G59.

The protein belongs to the Nudix hydrolase family. NudI subfamily. In terms of assembly, monomer. The cofactor is Mg(2+).

The enzyme catalyses a ribonucleoside 5'-triphosphate + H2O = a ribonucleoside 5'-phosphate + diphosphate + H(+). It catalyses the reaction a 2'-deoxyribonucleoside 5'-triphosphate + H2O = a 2'-deoxyribonucleoside 5'-phosphate + diphosphate + H(+). It carries out the reaction dUTP + H2O = dUMP + diphosphate + H(+). The catalysed reaction is dTTP + H2O = dTMP + diphosphate + H(+). The enzyme catalyses dCTP + H2O = dCMP + diphosphate + H(+). In terms of biological role, catalyzes the hydrolysis of nucleoside triphosphates, with a preference for pyrimidine deoxynucleoside triphosphates (dUTP, dTTP and dCTP). This is Nucleoside triphosphatase NudI from Escherichia coli O6:K15:H31 (strain 536 / UPEC).